The primary structure comprises 429 residues: Enolase (429 aa).

Gln167 provides a ligand contact to (2R)-2-phosphoglycerate. Residue Glu209 is the Proton donor of the active site. 3 residues coordinate Mg(2+): Asp246, Glu289, and Asp316. The (2R)-2-phosphoglycerate site is built by Lys341, Arg370, Ser371, and Lys392. Lys341 functions as the Proton acceptor in the catalytic mechanism.

Belongs to the enolase family. In terms of assembly, component of the RNA degradosome, a multiprotein complex involved in RNA processing and mRNA degradation. Mg(2+) serves as cofactor.

The protein localises to the cytoplasm. It is found in the secreted. Its subcellular location is the cell surface. The catalysed reaction is (2R)-2-phosphoglycerate = phosphoenolpyruvate + H2O. The protein operates within carbohydrate degradation; glycolysis; pyruvate from D-glyceraldehyde 3-phosphate: step 4/5. Functionally, catalyzes the reversible conversion of 2-phosphoglycerate (2-PG) into phosphoenolpyruvate (PEP). It is essential for the degradation of carbohydrates via glycolysis. The protein is Enolase of Cellvibrio japonicus (strain Ueda107) (Pseudomonas fluorescens subsp. cellulosa).